We begin with the raw amino-acid sequence, 510 residues long: ATP synthase subunit alpha (510 aa).

Position 169-176 (169-176 (GDRQTGKT)) interacts with ATP.

Belongs to the ATPase alpha/beta chains family. In terms of assembly, F-type ATPases have 2 components, CF(1) - the catalytic core - and CF(0) - the membrane proton channel. CF(1) has five subunits: alpha(3), beta(3), gamma(1), delta(1), epsilon(1). CF(0) has three main subunits: a(1), b(2) and c(9-12). The alpha and beta chains form an alternating ring which encloses part of the gamma chain. CF(1) is attached to CF(0) by a central stalk formed by the gamma and epsilon chains, while a peripheral stalk is formed by the delta and b chains.

It localises to the cell membrane. It catalyses the reaction ATP + H2O + 4 H(+)(in) = ADP + phosphate + 5 H(+)(out). Its function is as follows. Produces ATP from ADP in the presence of a proton gradient across the membrane. The alpha chain is a regulatory subunit. The chain is ATP synthase subunit alpha from Buchnera aphidicola subsp. Schizaphis graminum (strain Sg).